Consider the following 665-residue polypeptide: Methionine--tRNA ligase (665 aa).

The short motif at 12–22 (YYPSGKLHIGS) is the 'HIGH' region element. The 'KMSKS' region motif lies at 308–312 (KMSKS). Lys311 lines the ATP pocket. Residues 562–665 (TFDAVEIRVA…SSVPNGSIIG (104 aa)) enclose the tRNA-binding domain.

Belongs to the class-I aminoacyl-tRNA synthetase family. MetG type 2B subfamily. In terms of assembly, homodimer.

It is found in the cytoplasm. It carries out the reaction tRNA(Met) + L-methionine + ATP = L-methionyl-tRNA(Met) + AMP + diphosphate. In terms of biological role, is required not only for elongation of protein synthesis but also for the initiation of all mRNA translation through initiator tRNA(fMet) aminoacylation. This is Methionine--tRNA ligase (metG) from Streptococcus pyogenes serotype M3 (strain SSI-1).